The primary structure comprises 290 residues: Diaminopimelate epimerase (290 aa).

N14 and N67 together coordinate substrate. C76 acts as the Proton donor in catalysis. Substrate-binding positions include 77-78 (GN), N166, N199, and 217-218 (ER). C226 (proton acceptor) is an active-site residue. 227–228 (GT) contacts substrate.

This sequence belongs to the diaminopimelate epimerase family. As to quaternary structure, homodimer.

Its subcellular location is the cytoplasm. The enzyme catalyses (2S,6S)-2,6-diaminopimelate = meso-2,6-diaminopimelate. It functions in the pathway amino-acid biosynthesis; L-lysine biosynthesis via DAP pathway; DL-2,6-diaminopimelate from LL-2,6-diaminopimelate: step 1/1. Catalyzes the stereoinversion of LL-2,6-diaminopimelate (L,L-DAP) to meso-diaminopimelate (meso-DAP), a precursor of L-lysine and an essential component of the bacterial peptidoglycan. The protein is Diaminopimelate epimerase of Geobacillus kaustophilus (strain HTA426).